A 621-amino-acid polypeptide reads, in one-letter code: Glutathione-regulated potassium-efflux system protein KefC (621 aa).

A run of 12 helical transmembrane segments spans residues 9 to 29, 30 to 50, 54 to 74, 90 to 110, 114 to 134, 149 to 169, 178 to 198, 232 to 252, 270 to 290, 296 to 316, 326 to 346, and 359 to 379; these read ALIYLGAAALIVPIASVLGLG, SVLGYLIAGCIIGPWALRLVN, AILHFAEIGVVLMLVAMGLEL, GALQMVACGVLIGLFCMLLGL, VAELIGMTLALSSTAIAMQAM, FAVLLFQDIAAIPLVAMIPLL, LMAFALSALKVAAALALVVVL, LLLEEVGLSMAMGAFLAGVLL, GLLLGLFFIGVGMSIDFAPWS, IVILLVGFPAIKMLMLWLIAQ, RWFAVLLGQGSEFAFVVFGPA, and ALTLAVALSMATTPILLVLLT. The RCK N-terminal domain occupies 399–518; sequence QPRVIVAGFG…AGVEAPERET (120 aa). The interval 598-621 is disordered; it reads GWQGTEEGRHTGDIADEPENKPSA.

The protein belongs to the monovalent cation:proton antiporter 2 (CPA2) transporter (TC 2.A.37) family. KefC subfamily. Homodimer. Interacts with the regulatory subunit KefF.

It is found in the cell inner membrane. Pore-forming subunit of a potassium efflux system that confers protection against electrophiles. Catalyzes K(+)/H(+) antiport. The sequence is that of Glutathione-regulated potassium-efflux system protein KefC from Klebsiella aerogenes (Enterobacter aerogenes).